The chain runs to 1172 residues: Putative cadmium/zinc-transporting ATPase HMA4 (1172 aa).

Residues 1-93 (MALQNKEEEK…VRVNGETSFK (93 aa)) lie on the Cytoplasmic side of the membrane. The HMA domain maps to 17-83 (QKSYFDVLGI…ALNEARLEAN (67 aa)). A helical transmembrane segment spans residues 94–115 (NKWPSPFAVVSGLLLLLSFLKF). At 116–118 (VYS) the chain is on the extracellular side. Residues 119–138 (PLRWLAVAAVAAGIYPILAK) form a helical membrane-spanning segment. The Cytoplasmic segment spans residues 139–145 (AFASIKR). The chain crosses the membrane as a helical span at residues 146–166 (PRIDINILVIITVIATLAMQD). A topological domain (extracellular) is located at residue F167. Residues 168–188 (MEAAAVVFLFTISDWLETRAS) form a helical membrane-spanning segment. Residues 189–314 (YKATSVMQSL…KTKSQRLIDK (126 aa)) are Cytoplasmic-facing. A helical membrane pass occupies residues 315–337 (CSQYYTPAIILVSACVAIVPVIM). Over 338-345 (KVHNLKHW) the chain is Extracellular. The helical transmembrane segment at 346 to 363 (FHLALVVLVSGCPCGLIL) threads the bilayer. Topologically, residues 364 to 656 (STPVATFCAL…KLARRARRKV (293 aa)) are cytoplasmic. Residue D401 is the 4-aspartylphosphate intermediate of the active site. The Mg(2+) site is built by D601 and D605. Residues 657 to 676 (VENVCLSIILKAGILALAFA) traverse the membrane as a helical segment. Residues 677 to 680 (GHPL) are Extracellular-facing. A helical membrane pass occupies residues 681–700 (IWAAVLVDVGTCLLVIFNSM). The Cytoplasmic portion of the chain corresponds to 701–1172 (LLLREKKKIG…HHHHHHHVSA (472 aa)).

Belongs to the cation transport ATPase (P-type) (TC 3.A.3) family. Type IB subfamily.

It localises to the membrane. The enzyme catalyses Zn(2+)(in) + ATP + H2O = Zn(2+)(out) + ADP + phosphate + H(+). The catalysed reaction is Cd(2+)(in) + ATP + H2O = Cd(2+)(out) + ADP + phosphate + H(+). Its function is as follows. Involved in cadmium/zinc transport. The sequence is that of Putative cadmium/zinc-transporting ATPase HMA4 (HMA4) from Arabidopsis thaliana (Mouse-ear cress).